A 330-amino-acid polypeptide reads, in one-letter code: MAYHTPFAAQPPVASSGLPLTLISLDDWALVTLTGADRVKYLQGQVTADIDALSADQHVLCAHCDAKGKMWSNLRLFYRGEGLAFIERRSLLDNQLSELKKYAVFSKVVIAPQPDAVLIGVAGSQAKTALAEIFTELPSAEHPVTQMGNSTLLHFSLPAERFLLVTDTEQAQQLVEKLAGRAQFNDSKQWLALDIEAGFPIIDAANSAQFIPQATNIQALNGISFTKGCYTGQEMVARAKYRGANKRALYWLAGNASRVPAAGEDLEWQLGENWRRTGTVLSAIQLNDGTVWVQAVLNNDLAADSVLRVRDDALGTLAIQPLPYSLAEDK.

The folate site is built by Trp-28 and Trp-190.

It belongs to the tRNA-modifying YgfZ family.

It localises to the cytoplasm. Its function is as follows. Folate-binding protein involved in regulating the level of ATP-DnaA and in the modification of some tRNAs. It is probably a key factor in regulatory networks that act via tRNA modification, such as initiation of chromosomal replication. This chain is tRNA-modifying protein YgfZ, found in Yersinia pseudotuberculosis serotype O:1b (strain IP 31758).